The following is a 732-amino-acid chain: Catalase-peroxidase (732 aa).

The first 15 residues, 1-15 (MSTESKCPFAGGAYA), serve as a signal peptide directing secretion. The tryptophyl-tyrosyl-methioninium (Trp-Tyr) (with M-245) cross-link spans 96-219 (WHSAGTYRIY…LGAVQMGLIY (124 aa)). Residue His97 is the Proton acceptor of the active site. Positions 219 to 245 (YVNPEGPNGNPDPLASARDIRETFARM) form a cross-link, tryptophyl-tyrosyl-methioninium (Tyr-Met) (with W-96). Residue His260 participates in heme b binding.

The protein belongs to the peroxidase family. Peroxidase/catalase subfamily. In terms of assembly, homodimer or homotetramer. The cofactor is heme b. Formation of the three residue Trp-Tyr-Met cross-link is important for the catalase, but not the peroxidase activity of the enzyme.

The catalysed reaction is H2O2 + AH2 = A + 2 H2O. It catalyses the reaction 2 H2O2 = O2 + 2 H2O. Functionally, bifunctional enzyme with both catalase and broad-spectrum peroxidase activity. This Acidobacterium capsulatum (strain ATCC 51196 / DSM 11244 / BCRC 80197 / JCM 7670 / NBRC 15755 / NCIMB 13165 / 161) protein is Catalase-peroxidase.